Here is a 241-residue protein sequence, read N- to C-terminus: Uridylate kinase (241 aa).

12-15 is a binding site for ATP; the sequence is KVSG. Residues 20–25 form an involved in allosteric activation by GTP region; that stretch reads GEKGTG. Gly-54 provides a ligand contact to UMP. Residues Gly-55 and Arg-59 each contribute to the ATP site. Residues Asp-74 and 135–142 each bind UMP; that span reads TGNPYFST. Positions 163, 169, and 172 each coordinate ATP.

The protein belongs to the UMP kinase family. As to quaternary structure, homohexamer.

The protein resides in the cytoplasm. The enzyme catalyses UMP + ATP = UDP + ADP. It functions in the pathway pyrimidine metabolism; CTP biosynthesis via de novo pathway; UDP from UMP (UMPK route): step 1/1. Allosterically activated by GTP. Inhibited by UTP. In terms of biological role, catalyzes the reversible phosphorylation of UMP to UDP. In Lactobacillus johnsonii (strain CNCM I-12250 / La1 / NCC 533), this protein is Uridylate kinase.